The following is a 149-amino-acid chain: Transcriptional repressor NrdR (149 aa).

A zinc finger lies at 3-34 (CPYCSYEESKVVDSRSAEDYNAIRRRRECLRC). An ATP-cone domain is found at 49-139 (ILVIKKDLSR…VYRQFKDINT (91 aa)).

This sequence belongs to the NrdR family. Requires Zn(2+) as cofactor.

Functionally, negatively regulates transcription of bacterial ribonucleotide reductase nrd genes and operons by binding to NrdR-boxes. This Clostridium perfringens (strain SM101 / Type A) protein is Transcriptional repressor NrdR.